Consider the following 243-residue polypeptide: Endochitinase (243 aa).

3 cysteine pairs are disulfide-bonded: Cys23-Cys85, Cys97-Cys105, and Cys223-Cys236. Catalysis depends on Glu67, which acts as the Proton donor.

It localises to the vacuole. The enzyme catalyses Random endo-hydrolysis of N-acetyl-beta-D-glucosaminide (1-&gt;4)-beta-linkages in chitin and chitodextrins.. Its function is as follows. Defense against chitin-containing fungal pathogens. Shows activity on chitin, tetra-N-acetylglucosamine and chitosan. This is Endochitinase from Carica papaya (Papaya).